A 295-amino-acid polypeptide reads, in one-letter code: Probable porphobilinogen deaminase (295 aa).

An S-(dipyrrolylmethanemethyl)cysteine modification is found at C234.

It belongs to the HMBS family. The cofactor is dipyrromethane.

It carries out the reaction 4 porphobilinogen + H2O = hydroxymethylbilane + 4 NH4(+). It participates in porphyrin-containing compound metabolism; protoporphyrin-IX biosynthesis; coproporphyrinogen-III from 5-aminolevulinate: step 2/4. Functionally, tetrapolymerization of the monopyrrole PBG into the hydroxymethylbilane pre-uroporphyrinogen in several discrete steps. This is Probable porphobilinogen deaminase (hemC) from Thermoplasma acidophilum (strain ATCC 25905 / DSM 1728 / JCM 9062 / NBRC 15155 / AMRC-C165).